Consider the following 127-residue polypeptide: NADPH-dependent 7-cyano-7-deazaguanine reductase (127 aa).

Catalysis depends on Cys40, which acts as the Thioimide intermediate. Catalysis depends on Asp47, which acts as the Proton donor. Substrate-binding positions include 62-64 (VEL) and 81-82 (HE).

Belongs to the GTP cyclohydrolase I family. QueF type 1 subfamily.

The protein localises to the cytoplasm. It catalyses the reaction 7-aminomethyl-7-carbaguanine + 2 NADP(+) = 7-cyano-7-deazaguanine + 2 NADPH + 3 H(+). It functions in the pathway tRNA modification; tRNA-queuosine biosynthesis. Catalyzes the NADPH-dependent reduction of 7-cyano-7-deazaguanine (preQ0) to 7-aminomethyl-7-deazaguanine (preQ1). The sequence is that of NADPH-dependent 7-cyano-7-deazaguanine reductase from Campylobacter lari (strain RM2100 / D67 / ATCC BAA-1060).